A 694-amino-acid polypeptide reads, in one-letter code: Zinc finger BED domain-containing protein 5 (694 aa).

The BED-type zinc finger occupies 109–165; sequence RKYDESYLSFGFTYFGNRDAPHAQCVLCKKILSNSSLAPSKLRRHLETKHAAYKDKD. Cys133, Cys136, His153, and His158 together coordinate Zn(2+).

The sequence is that of Zinc finger BED domain-containing protein 5 (ZBED5) from Canis lupus familiaris (Dog).